Reading from the N-terminus, the 65-residue chain is Photosystem II reaction center protein Z (65 aa).

A run of 2 helical transmembrane segments spans residues 11-31 (LVLALIIFSFILVLTLPVIFA) and 44-64 (WLACRFWFFLVFLIGILDGIF).

This sequence belongs to the PsbZ family. In terms of assembly, PSII is composed of 1 copy each of membrane proteins PsbA, PsbB, PsbC, PsbD, PsbE, PsbF, PsbH, PsbI, PsbJ, PsbK, PsbL, PsbM, PsbT, PsbY, PsbZ, Psb30/Ycf12, at least 3 peripheral proteins of the oxygen-evolving complex and a large number of cofactors. It forms dimeric complexes.

The protein localises to the plastid. It localises to the chloroplast thylakoid membrane. In terms of biological role, may control the interaction of photosystem II (PSII) cores with the light-harvesting antenna, regulates electron flow through the 2 photosystem reaction centers. PSII is a light-driven water plastoquinone oxidoreductase, using light energy to abstract electrons from H(2)O, generating a proton gradient subsequently used for ATP formation. This Euglena gracilis protein is Photosystem II reaction center protein Z.